We begin with the raw amino-acid sequence, 154 residues long: uncharacterized protein (154 aa).

This is an uncharacterized protein from Schizosaccharomyces pombe (strain 972 / ATCC 24843) (Fission yeast).